Here is a 265-residue protein sequence, read N- to C-terminus: Cytochrome c oxidase subunit 3 (265 aa).

6 consecutive transmembrane segments (helical) span residues 16–36 (PWPISGSLGALATTVGGVMYM), 41–61 (GGATLLSLGLIFILYTMFVWW), 81–101 (GPRYGFILFIVSEVMFLFALF), 162–182 (AVYALVATVSLALVFTAFQGM), 200–220 (FFLATGFHGFHVIIGTLFSIV), and 245–265 (WHFVDVVRLFPFVSIYWWGGI).

Belongs to the cytochrome c oxidase subunit 3 family. Component of the cytochrome c oxidase (complex IV, CIV), a multisubunit enzyme composed of a catalytic core of 3 subunits and several supernumerary subunits. The complex exists as a monomer or a dimer and forms supercomplexes (SCs) in the inner mitochondrial membrane with ubiquinol-cytochrome c oxidoreductase (cytochrome b-c1 complex, complex III, CIII).

It localises to the mitochondrion inner membrane. The enzyme catalyses 4 Fe(II)-[cytochrome c] + O2 + 8 H(+)(in) = 4 Fe(III)-[cytochrome c] + 2 H2O + 4 H(+)(out). Its function is as follows. Component of the cytochrome c oxidase, the last enzyme in the mitochondrial electron transport chain which drives oxidative phosphorylation. The respiratory chain contains 3 multisubunit complexes succinate dehydrogenase (complex II, CII), ubiquinol-cytochrome c oxidoreductase (cytochrome b-c1 complex, complex III, CIII) and cytochrome c oxidase (complex IV, CIV), that cooperate to transfer electrons derived from NADH and succinate to molecular oxygen, creating an electrochemical gradient over the inner membrane that drives transmembrane transport and the ATP synthase. Cytochrome c oxidase is the component of the respiratory chain that catalyzes the reduction of oxygen to water. Electrons originating from reduced cytochrome c in the intermembrane space (IMS) are transferred via the dinuclear copper A center (CU(A)) of subunit 2 and heme A of subunit 1 to the active site in subunit 1, a binuclear center (BNC) formed by heme A3 and copper B (CU(B)). The BNC reduces molecular oxygen to 2 water molecules using 4 electrons from cytochrome c in the IMS and 4 protons from the mitochondrial matrix. This Helianthus annuus (Common sunflower) protein is Cytochrome c oxidase subunit 3 (COX3).